The chain runs to 803 residues: Pre-mRNA-splicing ATP-dependent RNA helicase prp28 (803 aa).

Disordered stretches follow at residues 1–83 (MDDI…PLSV) and 115–210 (KRAK…PVDD). A compositionally biased stretch (pro residues) spans 11–62 (EVPPPQPPPEPVERPPTPPPPPPEESVAPPPPPEVVAPPPPPEDLPPAPPPP). Basic and acidic residues predominate over residues 115–126 (KRAKEVEAERRL). A compositionally biased stretch (polar residues) spans 135–146 (SATQSPSVSSEV). Residues 367–395 (RSWDESGLPKRLMELVNKVGYKEPTPIQR) carry the Q motif motif. The Helicase ATP-binding domain maps to 398 to 603 (IPIAMQSRDL…RKYLRRPAIV (206 aa)). 411–418 (AVTGSGKT) serves as a coordination point for ATP. The DEAD box signature appears at 526-529 (DEAD). In terms of domain architecture, Helicase C-terminal spans 614–777 (TVEQRVEFIA…RLPEELRKHE (164 aa)). The interval 773–803 (LRKHEAAQSKPTRGFAKKNDDNSAFGSKGGW) is disordered.

It belongs to the DEAD box helicase family. DDX23/PRP28 subfamily. As to quaternary structure, component of the U5 snRNP complex.

It localises to the cytoplasm. The protein resides in the nucleus. It carries out the reaction ATP + H2O = ADP + phosphate + H(+). In terms of biological role, ATP-dependent RNA helicase involved in mRNA splicing. May destabilize the U1/5'-splice site duplex to permit an effective competition for the 5'-splice site by the U6 snRNA, resulting in the switch between U1 and U6 at the 5'-splice site. May also act to unwind the U4/U6 base-pairing interaction in the U4/U6/U5 snRNP, facilitating the first covalent step of splicing. This chain is Pre-mRNA-splicing ATP-dependent RNA helicase prp28 (prp28), found in Aspergillus oryzae (strain ATCC 42149 / RIB 40) (Yellow koji mold).